We begin with the raw amino-acid sequence, 344 residues long: Phosphoribosylformylglycinamidine cyclo-ligase (344 aa).

This sequence belongs to the AIR synthase family.

It is found in the cytoplasm. The catalysed reaction is 2-formamido-N(1)-(5-O-phospho-beta-D-ribosyl)acetamidine + ATP = 5-amino-1-(5-phospho-beta-D-ribosyl)imidazole + ADP + phosphate + H(+). It functions in the pathway purine metabolism; IMP biosynthesis via de novo pathway; 5-amino-1-(5-phospho-D-ribosyl)imidazole from N(2)-formyl-N(1)-(5-phospho-D-ribosyl)glycinamide: step 2/2. In Glaesserella parasuis serovar 5 (strain SH0165) (Haemophilus parasuis), this protein is Phosphoribosylformylglycinamidine cyclo-ligase.